Here is a 245-residue protein sequence, read N- to C-terminus: Eukaryotic translation initiation factor 6 (245 aa).

Tyr-113 carries the phosphotyrosine modification. Phosphothreonine is present on Thr-165. Ser-166 carries the phosphoserine modification. A phosphoserine; by CK1 mark is found at Ser-174 and Ser-175. Ser-235 is modified (phosphoserine; by PKC). Ser-239 and Ser-243 each carry phosphoserine.

The protein belongs to the eIF-6 family. Monomer. Associates with the 60S ribosomal subunit. Interacts with RACK1. Interacts with DICER1, AGO2, TARBP2, MOV10 and RPL7A; they form a large RNA-induced silencing complex (RISC). Post-translationally, phosphorylation at Ser-174 and Ser-175 by CSNK1D/CK1 promotes nuclear export. Ufmylated by UFL1.

Its subcellular location is the cytoplasm. The protein localises to the nucleus. It is found in the nucleolus. Binds to the 60S ribosomal subunit and prevents its association with the 40S ribosomal subunit to form the 80S initiation complex in the cytoplasm. Behaves as a stimulatory translation initiation factor downstream insulin/growth factors. Is also involved in ribosome biogenesis. Associates with pre-60S subunits in the nucleus and is involved in its nuclear export. Cytoplasmic release of TIF6 from 60S subunits and nuclear relocalization is promoted by a RACK1 (RACK1)-dependent protein kinase C activity. In tissues responsive to insulin, controls fatty acid synthesis and glycolysis by exerting translational control of adipogenic transcription factors such as CEBPB, CEBPD and ATF4 that have G/C rich or uORF in their 5'UTR. Required for ROS-dependent megakaryocyte maturation and platelets formation, controls the expression of mitochondrial respiratory chain genes involved in reactive oxygen species (ROS) synthesis. Involved in miRNA-mediated gene silencing by the RNA-induced silencing complex (RISC). Required for both miRNA-mediated translational repression and miRNA-mediated cleavage of complementary mRNAs by RISC. Modulates cell cycle progression and global translation of pre-B cells, its activation seems to be rate-limiting in tumorigenesis and tumor growth. This is Eukaryotic translation initiation factor 6 (Eif6) from Rattus norvegicus (Rat).